The following is a 139-amino-acid chain: Acidic phospholipase A2 Ts-A4 (139 aa).

A signal peptide spans 1-16 (MRTLWILAVLLVGVEG). 7 disulfide bridges follow: Cys-42–Cys-132, Cys-44–Cys-60, Cys-59–Cys-111, Cys-65–Cys-139, Cys-66–Cys-104, Cys-73–Cys-97, and Cys-91–Cys-102. Ca(2+)-binding residues include Tyr-43, Gly-45, and Gly-47. His-63 is an active-site residue. Asp-64 is a Ca(2+) binding site. Residue Asp-105 is part of the active site.

Ca(2+) serves as cofactor. In terms of tissue distribution, expressed by the venom gland.

It localises to the secreted. It catalyses the reaction a 1,2-diacyl-sn-glycero-3-phosphocholine + H2O = a 1-acyl-sn-glycero-3-phosphocholine + a fatty acid + H(+). PLA2 catalyzes the calcium-dependent hydrolysis of the 2-acyl groups in 3-sn-phosphoglycerides. The chain is Acidic phospholipase A2 Ts-A4 from Trimeresurus stejnegeri (Chinese green tree viper).